We begin with the raw amino-acid sequence, 213 residues long: Phospho-2-dehydro-3-deoxyheptonate aldolase, Tyr-sensitive (213 aa).

It belongs to the class-I DAHP synthase family.

It carries out the reaction D-erythrose 4-phosphate + phosphoenolpyruvate + H2O = 7-phospho-2-dehydro-3-deoxy-D-arabino-heptonate + phosphate. The protein operates within metabolic intermediate biosynthesis; chorismate biosynthesis; chorismate from D-erythrose 4-phosphate and phosphoenolpyruvate: step 1/7. Functionally, stereospecific condensation of phosphoenolpyruvate (PEP) and D-erythrose-4-phosphate (E4P) giving rise to 3-deoxy-D-arabino-heptulosonate-7-phosphate (DAHP). The chain is Phospho-2-dehydro-3-deoxyheptonate aldolase, Tyr-sensitive (aroF) from Enterobacter agglomerans (Erwinia herbicola).